Consider the following 124-residue polypeptide: Small ribosomal subunit protein uS13 (124 aa).

Residues 94-124 (RGLPVRGQRTKTNARTRKGPKRTIAGKKKAR) are disordered.

It belongs to the universal ribosomal protein uS13 family. In terms of assembly, part of the 30S ribosomal subunit. Forms a loose heterodimer with protein S19. Forms two bridges to the 50S subunit in the 70S ribosome.

Its function is as follows. Located at the top of the head of the 30S subunit, it contacts several helices of the 16S rRNA. In the 70S ribosome it contacts the 23S rRNA (bridge B1a) and protein L5 of the 50S subunit (bridge B1b), connecting the 2 subunits; these bridges are implicated in subunit movement. Contacts the tRNAs in the A and P-sites. This Mycolicibacterium vanbaalenii (strain DSM 7251 / JCM 13017 / BCRC 16820 / KCTC 9966 / NRRL B-24157 / PYR-1) (Mycobacterium vanbaalenii) protein is Small ribosomal subunit protein uS13.